A 301-amino-acid polypeptide reads, in one-letter code: Tetratricopeptide repeat domain-containing protein PYG7, chloroplastic (301 aa).

The N-terminal 61 residues, 1-61, are a transit peptide targeting the chloroplast; sequence MFESNMVLQT…FHDYVFAEIS (61 aa). The next 2 helical transmembrane spans lie at 82–102 and 121–141; these read TFLL…AAAA and IQLS…FYVI. TPR repeat units follow at residues 168–201, 206–239, and 240–273; these read ATEL…WDGD, AQVY…QPGY, and VTAW…DPNN.

Interacts with PSA3.

The protein localises to the plastid. The protein resides in the chloroplast thylakoid membrane. Functionally, nuclear genome-encoded factor required for the accumulation of photosystem I (PSI). Functions as a PSI biogenesis factor. Cooperates with PSA3 to promote the stable assembly of PSI in the thylakoid membrane. May target primarily the PsaC subunit. The chain is Tetratricopeptide repeat domain-containing protein PYG7, chloroplastic from Arabidopsis thaliana (Mouse-ear cress).